A 366-amino-acid polypeptide reads, in one-letter code: Inactive protein RESTRICTED TEV MOVEMENT 2 (366 aa).

The sHSP domain occupies 14 to 121; that stretch reads VQYEDFVPKS…LPETSRTEAA (108 aa). An A-1 repeat occupies 129-133; sequence LEEKR. A 6 X 5 AA repeats A of L-E-E-[SKR]-[ERK] region spans residues 129-220; it reads LEEKRLLEES…LEERRLEERK (92 aa). The stretch at 135–139 is one A-2 repeat; the sequence is LEESR. Residues 156–160 form an A-3 repeat; that stretch reads LEEKE. The B-1 repeat unit spans residues 163–176; sequence IRKLQEEAKAKEEA. Residues 163-206 form a 3 X 14 AA repeats B of [IMA]-[RK]-K-L-Q-E-E-A-K-A-K-E-[EK]-[LA] region; that stretch reads IRKLQEEAKAKEEAEMRKLQEEAKANEEAAAKKLQEEIEAKEKL. A B-2 repeat occupies 178 to 191; the sequence is MRKLQEEAKANEEA. Residues 193–205 form a B-3 repeat; it reads AKKLQEEIEAKEK. The A-4 repeat unit spans residues 206–210; the sequence is LEERK. The stretch at 211 to 215 is one A-5 repeat; that stretch reads LEERR. The A-6 repeat unit spans residues 216–220; it reads LEERK. The helical transmembrane segment at 322–342 threads the bilayer; that stretch reads LMMNVGVAALVIFALGAYVSY. The segment at 345–366 is disordered; that stretch reads CSSSSSSSSSSPSSSSSSTKPE. The span at 346-366 shows a compositional bias: low complexity; the sequence is SSSSSSSSSSPSSSSSSTKPE.

The protein belongs to the small heat shock protein (HSP20) family.

It is found in the cell membrane. Functionally, seems to not be involved in heat resistance. Unable to mediate restriction of long-distance movement of the pathogenic tobacco etch virus (TEV) without causing a hypersensitive response or inducing systemic acquired resistance. This Arabidopsis thaliana (Mouse-ear cress) protein is Inactive protein RESTRICTED TEV MOVEMENT 2 (RTM2).